The sequence spans 211 residues: Glycerol-3-phosphate acyltransferase (211 aa).

The next 6 membrane-spanning stretches (helical) occupy residues 10 to 30 (FYTWSIFLMSYLIGSIPFGLL), 63 to 83 (TLTLLCDILKGTVVVLVIKFL), 90 to 110 (SIIISLVGFFAFLGHLFPIWL), 126 to 146 (LGYYWPAAIVFIIVWIMFFIL), 152 to 172 (LSALIAVIITPIFVYFSYPHL), and 174 to 194 (AHCILVMMSIFVIIKHHANIA).

The protein belongs to the PlsY family. Probably interacts with PlsX.

It localises to the cell inner membrane. The enzyme catalyses an acyl phosphate + sn-glycerol 3-phosphate = a 1-acyl-sn-glycero-3-phosphate + phosphate. It functions in the pathway lipid metabolism; phospholipid metabolism. In terms of biological role, catalyzes the transfer of an acyl group from acyl-phosphate (acyl-PO(4)) to glycerol-3-phosphate (G3P) to form lysophosphatidic acid (LPA). This enzyme utilizes acyl-phosphate as fatty acyl donor, but not acyl-CoA or acyl-ACP. The polypeptide is Glycerol-3-phosphate acyltransferase (Bartonella quintana (strain Toulouse) (Rochalimaea quintana)).